The sequence spans 396 residues: Transcription factor IIIB 50 kDa subunit (396 aa).

A TFIIB-type zinc finger spans residues 3-36; that stretch reads GAKRCPDCGSSEIVEDAHYSQDQLVCADCGCILS. 4 residues coordinate Zn(2+): C7, C10, C28, and C31. Copy 2 of the repeat occupies 173–249; sequence VKSHCRSFKL…SRRLSCSLSR (77 aa). C342 bears the Cysteine sulfenic acid (-SOH) mark.

It belongs to the TFIIB family. Component of TFIIIB complexes. Interacts with TBP and forms a ternary complex with TBp and target DNA sequences. In terms of processing, in response to oxidative stress, a Cys-residue is reversibly oxidized to cysteine sulfenic acid. This impairs formation of a ternary complex with TBP and DNA and down-regulates expression of target genes in response to oxidative stress.

The protein resides in the nucleus. In terms of biological role, general activator of RNA polymerase III transcription. Factor exclusively required for RNA polymerase III transcription of genes with promoter elements upstream of the initiation sites. Contributes to the regulation of gene expression; functions as activator in the absence of oxidative stress. Down-regulates expression of target genes in response to oxidative stress. Overexpression protects cells against apoptosis in response to oxidative stress. In Xenopus laevis (African clawed frog), this protein is Transcription factor IIIB 50 kDa subunit (brf2).